A 189-amino-acid polypeptide reads, in one-letter code: GTP cyclohydrolase 1 (189 aa).

Positions 79, 82, and 150 each coordinate Zn(2+).

Belongs to the GTP cyclohydrolase I family. As to quaternary structure, homomer.

The catalysed reaction is GTP + H2O = 7,8-dihydroneopterin 3'-triphosphate + formate + H(+). Its pathway is cofactor biosynthesis; 7,8-dihydroneopterin triphosphate biosynthesis; 7,8-dihydroneopterin triphosphate from GTP: step 1/1. In Rickettsia peacockii (strain Rustic), this protein is GTP cyclohydrolase 1.